Here is a 428-residue protein sequence, read N- to C-terminus: UDP-N-acetylglucosamine 1-carboxyvinyltransferase (428 aa).

25-26 contributes to the phosphoenolpyruvate binding site; it reads KN. Residue R102 participates in UDP-N-acetyl-alpha-D-glucosamine binding. C126 acts as the Proton donor in catalysis. C126 is subject to 2-(S-cysteinyl)pyruvic acid O-phosphothioketal. Residues D316 and V338 each coordinate UDP-N-acetyl-alpha-D-glucosamine.

It belongs to the EPSP synthase family. MurA subfamily.

Its subcellular location is the cytoplasm. The catalysed reaction is phosphoenolpyruvate + UDP-N-acetyl-alpha-D-glucosamine = UDP-N-acetyl-3-O-(1-carboxyvinyl)-alpha-D-glucosamine + phosphate. The protein operates within cell wall biogenesis; peptidoglycan biosynthesis. Its function is as follows. Cell wall formation. Adds enolpyruvyl to UDP-N-acetylglucosamine. The protein is UDP-N-acetylglucosamine 1-carboxyvinyltransferase of Anaplasma marginale (strain St. Maries).